The sequence spans 711 residues: Ribosomal RNA large subunit methyltransferase K/L (711 aa).

The THUMP domain maps to 43–154 (LGYRITLWSR…RGQITIGLNF (112 aa)).

This sequence belongs to the methyltransferase superfamily. RlmKL family.

The protein resides in the cytoplasm. The enzyme catalyses guanosine(2445) in 23S rRNA + S-adenosyl-L-methionine = N(2)-methylguanosine(2445) in 23S rRNA + S-adenosyl-L-homocysteine + H(+). It carries out the reaction guanosine(2069) in 23S rRNA + S-adenosyl-L-methionine = N(2)-methylguanosine(2069) in 23S rRNA + S-adenosyl-L-homocysteine + H(+). In terms of biological role, specifically methylates the guanine in position 2445 (m2G2445) and the guanine in position 2069 (m7G2069) of 23S rRNA. The polypeptide is Ribosomal RNA large subunit methyltransferase K/L (Shewanella woodyi (strain ATCC 51908 / MS32)).